The primary structure comprises 313 residues: Dimethyladenosine transferase (313 aa).

Residues His37, Leu39, Gly64, Glu85, Asp113, and Asn128 each coordinate S-adenosyl-L-methionine.

It belongs to the class I-like SAM-binding methyltransferase superfamily. rRNA adenine N(6)-methyltransferase family. As to quaternary structure, part of the small subunit (SSU) processome, composed of more than 70 proteins and the RNA chaperone small nucleolar RNA (snoRNA) U3.

Its subcellular location is the nucleus. The protein localises to the nucleoplasm. It localises to the nucleolus. The enzyme catalyses adenosine(1779)/adenosine(1780) in 18S rRNA + 4 S-adenosyl-L-methionine = N(6)-dimethyladenosine(1779)/N(6)-dimethyladenosine(1780) in 18S rRNA + 4 S-adenosyl-L-homocysteine + 4 H(+). In terms of biological role, specifically dimethylates two adjacent adenosines in the loop of a conserved hairpin near the 3'-end of 18S rRNA in the 40S particle. Involved in the pre-rRNA processing steps leading to small-subunit rRNA production independently of its RNA-modifying catalytic activity. Part of the small subunit (SSU) processome, first precursor of the small eukaryotic ribosomal subunit. During the assembly of the SSU processome in the nucleolus, many ribosome biogenesis factors, an RNA chaperone and ribosomal proteins associate with the nascent pre-rRNA and work in concert to generate RNA folding, modifications, rearrangements and cleavage as well as targeted degradation of pre-ribosomal RNA by the RNA exosome. This chain is Dimethyladenosine transferase (Dimt1), found in Mus musculus (Mouse).